A 390-amino-acid polypeptide reads, in one-letter code: MSDIHVTPVFADAAPCASPAPEKINLLDLDRRQMREFFVQMGEKPFRADQIMKWIYHYCCDDFDAMTDINKVLRARLKQVAEIRAPEVAVEQRSSDGTIKWALQVGDQRVETVYIPEDDRATLCVSSQVGCALECKFCSTAQQGFNRNLRVSEIIGQVWRAAKIIGAQKVTGNRPITNVVMMGMGEPLLNLTNVIPAMEIMLDDFGFGLSKRRVTLSTSGVVPALDKLGDTIDVALAISLHAPNDTIRDEIVPINRKYNIDMFLGSVRRYLEKSNANQGRVTVEYVMLDHINDGTEHAHQLAECLKDTPCKINLIPWNPFPGAPFGRSSNSRIDRFSKVLMEYGFTVIVRKTRGDDIDAACGQLAGEVIDRTKRTLKKQAAGEPINVREV.

The Proton acceptor role is filled by Glu-111. In terms of domain architecture, Radical SAM core spans 117 to 356 (EDDRATLCVS…VIVRKTRGDD (240 aa)). Cys-124 and Cys-361 form a disulfide bridge. Cys-131, Cys-135, and Cys-138 together coordinate [4Fe-4S] cluster. S-adenosyl-L-methionine is bound by residues 185–186 (GE), Ser-217, 239–241 (SLH), and Asn-318. Cys-361 serves as the catalytic S-methylcysteine intermediate.

Belongs to the radical SAM superfamily. RlmN family. The cofactor is [4Fe-4S] cluster.

It is found in the cytoplasm. The enzyme catalyses adenosine(2503) in 23S rRNA + 2 reduced [2Fe-2S]-[ferredoxin] + 2 S-adenosyl-L-methionine = 2-methyladenosine(2503) in 23S rRNA + 5'-deoxyadenosine + L-methionine + 2 oxidized [2Fe-2S]-[ferredoxin] + S-adenosyl-L-homocysteine. The catalysed reaction is adenosine(37) in tRNA + 2 reduced [2Fe-2S]-[ferredoxin] + 2 S-adenosyl-L-methionine = 2-methyladenosine(37) in tRNA + 5'-deoxyadenosine + L-methionine + 2 oxidized [2Fe-2S]-[ferredoxin] + S-adenosyl-L-homocysteine. Functionally, specifically methylates position 2 of adenine 2503 in 23S rRNA and position 2 of adenine 37 in tRNAs. m2A2503 modification seems to play a crucial role in the proofreading step occurring at the peptidyl transferase center and thus would serve to optimize ribosomal fidelity. The protein is Dual-specificity RNA methyltransferase RlmN of Edwardsiella ictaluri (strain 93-146).